The sequence spans 173 residues: Peptide deformylase (173 aa).

Fe cation-binding residues include Cys-94 and His-136. Residue Glu-137 is part of the active site. His-140 serves as a coordination point for Fe cation.

Belongs to the polypeptide deformylase family. Fe(2+) serves as cofactor.

It carries out the reaction N-terminal N-formyl-L-methionyl-[peptide] + H2O = N-terminal L-methionyl-[peptide] + formate. Its function is as follows. Removes the formyl group from the N-terminal Met of newly synthesized proteins. Requires at least a dipeptide for an efficient rate of reaction. N-terminal L-methionine is a prerequisite for activity but the enzyme has broad specificity at other positions. The sequence is that of Peptide deformylase from Desulfosudis oleivorans (strain DSM 6200 / JCM 39069 / Hxd3) (Desulfococcus oleovorans).